The primary structure comprises 270 residues: Regulatory protein RecX (270 aa).

It belongs to the RecX family.

Its subcellular location is the cytoplasm. Its function is as follows. Modulates RecA activity. The polypeptide is Regulatory protein RecX (Bacillus cereus (strain B4264)).